The sequence spans 192 residues: Group XIIA secretory phospholipase A2 (192 aa).

The first 25 residues, 1–25 (MVTPRPAPARSPALLLLLLLATARG), serve as a signal peptide directing secretion. Gly91, Pro93, and Phe95 together coordinate Ca(2+). Residue His113 is part of the active site. Position 114 (Asp114) interacts with Ca(2+). Asp128 is a catalytic residue.

Belongs to the phospholipase A2 family. Ca(2+) serves as cofactor.

The protein localises to the secreted. The protein resides in the cytoplasm. It carries out the reaction a 1,2-diacyl-sn-glycero-3-phosphocholine + H2O = a 1-acyl-sn-glycero-3-phosphocholine + a fatty acid + H(+). PA2 catalyzes the calcium-dependent hydrolysis of the 2-acyl groups in 3-sn-phosphoglycerides. Does not exhibit detectable activity toward sn-2-arachidonoyl- or linoleoyl-phosphatidylcholine or -phosphatidylethanolamine. This chain is Group XIIA secretory phospholipase A2 (Pla2g12a), found in Mus musculus (Mouse).